A 684-amino-acid chain; its full sequence is TBC1 domain family member 12 (684 aa).

Disordered stretches follow at residues 1 to 41 (MVGP…RQTD), 119 to 138 (VPSPGTPPGSSPISSSSSSP), 169 to 202 (TFEGSRRQSAPDHLADGLSLPAESPGTAEQDGDR), and 219 to 290 (KRTK…SQST). The segment covering 25 to 34 (AADEEEGEGE) has biased composition (acidic residues). Residues 129–138 (SPISSSSSSP) are compositionally biased toward low complexity. Basic and acidic residues-rich tracts occupy residues 172–183 (GSRRQSAPDHLA) and 240–250 (PPRETAQKDSK). Residues 331 to 365 (EMVAEAKKREVKEAQRRKKLMKERIRQEENIASAM) are a coiled coil. A Rab-GAP TBC domain is found at 392–602 (GLPPSIRGKV…RVWDVFCRDG (211 aa)).

Its function is as follows. May act as a GTPase-activating protein for Rab family protein(s). This is TBC1 domain family member 12 (tbc1d12) from Xenopus tropicalis (Western clawed frog).